The following is a 287-amino-acid chain: Pyridoxal kinase PdxY (287 aa).

Substrate is bound by residues Ser9 and 44–45 (TQ). 3 residues coordinate ATP: Asp111, Glu147, and Lys180. Asp221 is a binding site for substrate.

The protein belongs to the pyridoxine kinase family. PdxY subfamily. In terms of assembly, homodimer. It depends on Mg(2+) as a cofactor.

It catalyses the reaction pyridoxal + ATP = pyridoxal 5'-phosphate + ADP + H(+). It functions in the pathway cofactor metabolism; pyridoxal 5'-phosphate salvage; pyridoxal 5'-phosphate from pyridoxal: step 1/1. Pyridoxal kinase involved in the salvage pathway of pyridoxal 5'-phosphate (PLP). Catalyzes the phosphorylation of pyridoxal to PLP. This is Pyridoxal kinase PdxY from Paraburkholderia phymatum (strain DSM 17167 / CIP 108236 / LMG 21445 / STM815) (Burkholderia phymatum).